Here is a 430-residue protein sequence, read N- to C-terminus: Paraneoplastic antigen-like protein 8A (430 aa).

Residues 219-228 (WKNTEDHGDP) are compositionally biased toward basic and acidic residues. 3 disordered regions span residues 219-270 (WKNT…NSNY), 313-364 (DPSD…RKKK), and 392-430 (GLGA…SRKL). Over residues 232–250 (LVRRPGGKIRSRRRKQKKN) the composition is skewed to basic residues. Positions 261–270 (SQGSNYNSNY) are enriched in polar residues.

It belongs to the PNMA family.

This is Paraneoplastic antigen-like protein 8A from Mus musculus (Mouse).